Consider the following 106-residue polypeptide: Secreted RxLR effector protein 18 (106 aa).

An N-terminal signal peptide occupies residues 1–17 (MRGSTAMLLAAIALFSS). A RxLR-dEER motif is present at residues 28-39 (RTLRSFEELEER).

Belongs to the RxLR effector family.

It is found in the secreted. It localises to the host cell. Functionally, effector that may act as a suppressor of cell death to interrupt plant immunity. I. This chain is Secreted RxLR effector protein 18, found in Plasmopara viticola (Downy mildew of grapevine).